A 238-amino-acid chain; its full sequence is Urease accessory protein UreG (238 aa).

The segment covering 1–15 has biased composition (basic and acidic residues); that stretch reads MPPHLIDGEPHDHAH. The interval 1-27 is disordered; sequence MPPHLIDGEPHDHAHDRPKRQRTPGEP. 34 to 41 is a binding site for GTP; it reads GPVGSGKT.

The protein belongs to the SIMIBI class G3E GTPase family. UreG subfamily. Homodimer. UreD, UreF and UreG form a complex that acts as a GTP-hydrolysis-dependent molecular chaperone, activating the urease apoprotein by helping to assemble the nickel containing metallocenter of UreC. The UreE protein probably delivers the nickel.

The protein resides in the cytoplasm. Its function is as follows. Facilitates the functional incorporation of the urease nickel metallocenter. This process requires GTP hydrolysis, probably effectuated by UreG. The protein is Urease accessory protein UreG of Nocardia farcinica (strain IFM 10152).